A 67-amino-acid polypeptide reads, in one-letter code: Beta-defensin 9 (67 aa).

The N-terminal stretch at 1 to 24 is a signal peptide; sequence MRTLCSLLLICCLLFSYTTPAANS. Intrachain disulfides connect cysteine 34–cysteine 62, cysteine 41–cysteine 55, and cysteine 45–cysteine 63.

The protein belongs to the beta-defensin family. As to expression, weakly expressed in adult and neonatal brain.

The protein localises to the secreted. In terms of biological role, has antibacterial activity. This chain is Beta-defensin 9 (Defb9), found in Mus musculus (Mouse).